Here is a 973-residue protein sequence, read N- to C-terminus: 109 kDa U5 small nuclear ribonucleoprotein component GFL (973 aa).

The segment at 1-40 (MDGSLYGECGNYIGPEIESDRDSDDSVEDEDLQEPGGSNG) is disordered. Acidic residues predominate over residues 17–33 (IESDRDSDDSVEDEDLQ). Residues 122 to 408 (ALVRNVALVG…LGVTLSNSAY (287 aa)) form the tr-type G domain. The interval 131-138 (GHLQHGKT) is G1. Residue 131–138 (GHLQHGKT) coordinates GTP. Residues 175 to 179 (NISIK) are G2. Residues 201 to 204 (DTPG) form a G3 region. GTP contacts are provided by residues 201–205 (DTPGN) and 255–258 (NKVD). Residues 255–258 (NKVD) form a G4 region. A G5 region spans residues 381 to 383 (YSQ).

This sequence belongs to the TRAFAC class translation factor GTPase superfamily. Classic translation factor GTPase family. In terms of tissue distribution, expressed in flower buds, open flowers and siliques. Expressed at low levels in rosettes leaves, cauline leaves and stems.

Its subcellular location is the nucleus speckle. Splicing factor involved in pre-mRNA splicing and component of the spliceosome. The polypeptide is 109 kDa U5 small nuclear ribonucleoprotein component GFL (Arabidopsis thaliana (Mouse-ear cress)).